We begin with the raw amino-acid sequence, 133 residues long: UPF0146 protein MTH_1000 (133 aa).

This sequence belongs to the UPF0146 family.

This Methanothermobacter thermautotrophicus (strain ATCC 29096 / DSM 1053 / JCM 10044 / NBRC 100330 / Delta H) (Methanobacterium thermoautotrophicum) protein is UPF0146 protein MTH_1000.